The following is a 139-amino-acid chain: Large ribosomal subunit protein bL17 (139 aa).

Belongs to the bacterial ribosomal protein bL17 family. In terms of assembly, part of the 50S ribosomal subunit. Contacts protein L32.

The protein is Large ribosomal subunit protein bL17 of Azorhizobium caulinodans (strain ATCC 43989 / DSM 5975 / JCM 20966 / LMG 6465 / NBRC 14845 / NCIMB 13405 / ORS 571).